Reading from the N-terminus, the 456-residue chain is MLNNAMSVVILAAGKGTRMYSDLPKVLHTLAGKAMVQHVIDAANELGAAHVHLVYGHGGDLLKQALKDDNLNWVLQAEQLGTGHAMQQAAPFFADDEDILMLYGDVPLISVETLQRLRDAKPQGGIGLLTVKLDDPTGYGRITRENGKVTGIVEHKDATDEQRQIQEINTGILIANGADMKRWLAKLTNNNAQGEYYITDIIALAYQEGREIVAVHPQRLSEVEGVNNRLQLSRLERVYQSEQAEKLLLAGVMLRDPARFDLRGTLTHGRDVEIDTNVIIEGNVTLGHRVKIGTGCVIKNSVIGDDCEISPYTVVEDANLAAACTIGPFARLRPGAELLEGAHVGNFVEMKKARLGKGSKVGHLTYLGDAEIGDNVNIGAGTITCNYDGANKFKTIIGDDVFVGSDTQLVAPVTVGKGATIAAGTTVTRNVGENALAISRVPQTQKEGWRRPVKKK.

Positions 1–229 (MLNNAMSVVI…LSEVEGVNNR (229 aa)) are pyrophosphorylase. UDP-N-acetyl-alpha-D-glucosamine-binding positions include 11-14 (LAAG), lysine 25, glutamine 76, 81-82 (GT), 103-105 (YGD), glycine 140, glutamate 154, asparagine 169, and asparagine 227. Aspartate 105 contacts Mg(2+). Position 227 (asparagine 227) interacts with Mg(2+). Positions 230-250 (LQLSRLERVYQSEQAEKLLLA) are linker. Residues 251-456 (GVMLRDPARF…EGWRRPVKKK (206 aa)) are N-acetyltransferase. The UDP-N-acetyl-alpha-D-glucosamine site is built by arginine 333 and lysine 351. Catalysis depends on histidine 363, which acts as the Proton acceptor. Residues tyrosine 366 and asparagine 377 each coordinate UDP-N-acetyl-alpha-D-glucosamine. Acetyl-CoA contacts are provided by residues alanine 380, 386 to 387 (NY), serine 405, alanine 423, and arginine 440.

The protein in the N-terminal section; belongs to the N-acetylglucosamine-1-phosphate uridyltransferase family. It in the C-terminal section; belongs to the transferase hexapeptide repeat family. In terms of assembly, homotrimer. The cofactor is Mg(2+).

Its subcellular location is the cytoplasm. The catalysed reaction is alpha-D-glucosamine 1-phosphate + acetyl-CoA = N-acetyl-alpha-D-glucosamine 1-phosphate + CoA + H(+). It carries out the reaction N-acetyl-alpha-D-glucosamine 1-phosphate + UTP + H(+) = UDP-N-acetyl-alpha-D-glucosamine + diphosphate. It participates in nucleotide-sugar biosynthesis; UDP-N-acetyl-alpha-D-glucosamine biosynthesis; N-acetyl-alpha-D-glucosamine 1-phosphate from alpha-D-glucosamine 6-phosphate (route II): step 2/2. Its pathway is nucleotide-sugar biosynthesis; UDP-N-acetyl-alpha-D-glucosamine biosynthesis; UDP-N-acetyl-alpha-D-glucosamine from N-acetyl-alpha-D-glucosamine 1-phosphate: step 1/1. The protein operates within bacterial outer membrane biogenesis; LPS lipid A biosynthesis. Its function is as follows. Catalyzes the last two sequential reactions in the de novo biosynthetic pathway for UDP-N-acetylglucosamine (UDP-GlcNAc). The C-terminal domain catalyzes the transfer of acetyl group from acetyl coenzyme A to glucosamine-1-phosphate (GlcN-1-P) to produce N-acetylglucosamine-1-phosphate (GlcNAc-1-P), which is converted into UDP-GlcNAc by the transfer of uridine 5-monophosphate (from uridine 5-triphosphate), a reaction catalyzed by the N-terminal domain. This is Bifunctional protein GlmU from Shigella sonnei (strain Ss046).